The following is a 230-amino-acid chain: GTP cyclohydrolase III (230 aa).

This sequence belongs to the archaeal-type GTP cyclohydrolase family.

It carries out the reaction GTP + 3 H2O = 2-amino-5-formylamino-6-(5-phospho-D-ribosylamino)pyrimidin-4(3H)-one + 2 phosphate + 2 H(+). Its function is as follows. Catalyzes the formation of 2-amino-5-formylamino-6-ribofuranosylamino-4(3H)-pyrimidinone ribonucleotide monophosphate and inorganic phosphate from GTP. Also has an independent pyrophosphate phosphohydrolase activity. This is GTP cyclohydrolase III from Saccharolobus islandicus (strain M.16.27) (Sulfolobus islandicus).